Consider the following 275-residue polypeptide: Light-independent protochlorophyllide reductase iron-sulfur ATP-binding protein (275 aa).

ATP-binding positions include 12-17 (GIGKST) and Lys-41. Position 16 (Ser-16) interacts with Mg(2+). Positions 97 and 131 each coordinate [4Fe-4S] cluster. ATP is bound at residue 182 to 183 (NR).

It belongs to the NifH/BchL/ChlL family. As to quaternary structure, homodimer. Protochlorophyllide reductase is composed of three subunits; BchL, BchN and BchB. [4Fe-4S] cluster serves as cofactor.

It carries out the reaction chlorophyllide a + oxidized 2[4Fe-4S]-[ferredoxin] + 2 ADP + 2 phosphate = protochlorophyllide a + reduced 2[4Fe-4S]-[ferredoxin] + 2 ATP + 2 H2O. Its pathway is porphyrin-containing compound metabolism; bacteriochlorophyll biosynthesis (light-independent). Functionally, component of the dark-operative protochlorophyllide reductase (DPOR) that uses Mg-ATP and reduced ferredoxin to reduce ring D of protochlorophyllide (Pchlide) to form chlorophyllide a (Chlide). This reaction is light-independent. The L component serves as a unique electron donor to the NB-component of the complex, and binds Mg-ATP. The protein is Light-independent protochlorophyllide reductase iron-sulfur ATP-binding protein of Chlorobium phaeobacteroides (strain BS1).